A 113-amino-acid polypeptide reads, in one-letter code: UPF0482 protein YnfB (113 aa).

The signal sequence occupies residues 1–28 (MNILSGKLPFLLGAVFAGSVVLATSVQA).

It belongs to the UPF0482 family.

The polypeptide is UPF0482 protein YnfB (Escherichia fergusonii (strain ATCC 35469 / DSM 13698 / CCUG 18766 / IAM 14443 / JCM 21226 / LMG 7866 / NBRC 102419 / NCTC 12128 / CDC 0568-73)).